The primary structure comprises 430 residues: Uric acid permease PucK (430 aa).

Helical transmembrane passes span 18–38, 43–63, 67–87, 97–117, 122–142, 163–183, 185–205, 209–229, 233–253, 274–294, 310–330, 333–353, 369–389, and 398–418; these read MLAM…AIGL, LTYL…LQLW, YFGI…GPMI, AIYG…GFFG, FFPP…LIPT, LLGF…KGFI, SIAI…MGKV, EVLE…PPTF, AVVT…GVYF, AEGL…TAFS, VIAI…AAAL, VIPT…VISY, LLII…PALF, and VLAG…HAFF.

It belongs to the nucleobase:cation symporter-2 (NCS2) (TC 2.A.40) family.

Its subcellular location is the cell membrane. Functionally, uptake of uric acid. The sequence is that of Uric acid permease PucK (pucK) from Bacillus subtilis (strain 168).